Here is a 127-residue protein sequence, read N- to C-terminus: Large ribosomal subunit protein bL12 (127 aa).

Belongs to the bacterial ribosomal protein bL12 family. In terms of assembly, homodimer. Part of the ribosomal stalk of the 50S ribosomal subunit. Forms a multimeric L10(L12)X complex, where L10 forms an elongated spine to which 2 to 4 L12 dimers bind in a sequential fashion. Binds GTP-bound translation factors.

Functionally, forms part of the ribosomal stalk which helps the ribosome interact with GTP-bound translation factors. Is thus essential for accurate translation. The polypeptide is Large ribosomal subunit protein bL12 (Chloroherpeton thalassium (strain ATCC 35110 / GB-78)).